Consider the following 477-residue polypeptide: Ribulose bisphosphate carboxylase large chain (477 aa).

The propeptide occupies 1-2 (MS). Pro3 is subject to N-acetylproline. An N6,N6,N6-trimethyllysine modification is found at Lys14. 2 residues coordinate substrate: Asn123 and Thr173. The active-site Proton acceptor is Lys175. Lys177 lines the substrate pocket. Residues Lys201, Asp203, and Glu204 each coordinate Mg(2+). Lys201 carries the post-translational modification N6-carboxylysine. His294 functions as the Proton acceptor in the catalytic mechanism. Residues Arg295, His327, and Ser379 each contribute to the substrate site.

This sequence belongs to the RuBisCO large chain family. Type I subfamily. As to quaternary structure, heterohexadecamer of 8 large chains and 8 small chains; disulfide-linked. The disulfide link is formed within the large subunit homodimers. Mg(2+) is required as a cofactor. Post-translationally, the disulfide bond which can form in the large chain dimeric partners within the hexadecamer appears to be associated with oxidative stress and protein turnover.

The protein resides in the plastid. Its subcellular location is the chloroplast. The enzyme catalyses 2 (2R)-3-phosphoglycerate + 2 H(+) = D-ribulose 1,5-bisphosphate + CO2 + H2O. It carries out the reaction D-ribulose 1,5-bisphosphate + O2 = 2-phosphoglycolate + (2R)-3-phosphoglycerate + 2 H(+). Its function is as follows. RuBisCO catalyzes two reactions: the carboxylation of D-ribulose 1,5-bisphosphate, the primary event in carbon dioxide fixation, as well as the oxidative fragmentation of the pentose substrate in the photorespiration process. Both reactions occur simultaneously and in competition at the same active site. The polypeptide is Ribulose bisphosphate carboxylase large chain (rbcL) (Solanum tuberosum (Potato)).